Consider the following 200-residue polypeptide: 3-isopropylmalate dehydratase small subunit (200 aa).

The protein belongs to the LeuD family. LeuD type 1 subfamily. In terms of assembly, heterodimer of LeuC and LeuD.

The enzyme catalyses (2R,3S)-3-isopropylmalate = (2S)-2-isopropylmalate. It participates in amino-acid biosynthesis; L-leucine biosynthesis; L-leucine from 3-methyl-2-oxobutanoate: step 2/4. Functionally, catalyzes the isomerization between 2-isopropylmalate and 3-isopropylmalate, via the formation of 2-isopropylmaleate. This Actinobacillus pleuropneumoniae serotype 3 (strain JL03) protein is 3-isopropylmalate dehydratase small subunit.